A 1050-amino-acid chain; its full sequence is Ankyrin repeat domain-containing protein 27 (1050 aa).

The sufficient for GEF activity towards RAB21 stretch occupies residues 1–372 (MALYDEDLLK…RQGSLSAKPP (372 aa)). Positions 233 to 371 (ASEDAAFNKI…IRQGSLSAKP (139 aa)) constitute a VPS9 domain. ANK repeat units lie at residues 396–426 (SPTD…DKDA), 462–491 (RGHT…VVNA), 495–524 (HGAT…SAEV), 528–560 (NGNT…RLDI), 564–593 (KGDT…SPEI), and 597–627 (LKET…RQKS). The sufficient for interaction with VPS29 stretch occupies residues 396–460 (SPTDCLFKHI…PSVVTPFSRD (65 aa)). The interval 451–600 (PSVVTPFSRD…PEIQNRLKET (150 aa)) is interaction with RAB38. The interval 451 to 730 (PSVVTPFSRD…APAQKRLAKV (280 aa)) is interaction with RAB32. The interval 630–665 (APVQSLQRSVDSISQESSTSSFSSMSAGSRQEETKK) is disordered. The segment covering 638–658 (SVDSISQESSTSSFSSMSAGS) has biased composition (low complexity). Positions 658-707 (SRQEETKKDYREVEKLLRAVADGDLEMVRYLLEWTEEDLEDAEDTVSAVD) are required for interaction with VAMP7. ANK repeat units follow at residues 668 to 698 (REVE…DLED), 743 to 772 (DGSS…NAGA), 776 to 805 (DQAV…KPNK), 809 to 838 (SGNT…AINT), and 842 to 871 (KGNT…SVQV). A sufficient for interaction with VPS29 region spans residues 692–746 (TEEDLEDAEDTVSAVDPEFCHPLCQCPKCAPAQKRLAKVPASGLGVNVTSQDGSS). 2 positions are modified to phosphoserine: Ser962 and Ser970. The interval 987 to 1050 (PAQSGSHAAE…TPQEVSASRS (64 aa)) is disordered. Residues 994–1007 (AAEKGNSDWPERPR) are compositionally biased toward basic and acidic residues. Thr1023 bears the Phosphothreonine mark. A compositionally biased stretch (polar residues) spans 1040-1050 (STPQEVSASRS).

As to quaternary structure, interacts with RAB21 (GDP-bound form), VPS29, KIF5A, KIF5C, GOLGA4. Interacts with RAB32 (GTP-bound form), RAB38 (GTP-bound form), VAMP7. Interacts with low affinity with RAB5. ANKRD27:RAB32 heterodimers can homodimerize to form tetramers. Can interact with RAB38 or RAB32, VPS29 and VAMP7 simultaneously. A decreased interaction with RAB32 seen in the presence of SGSM2.

It is found in the early endosome. Its subcellular location is the late endosome. The protein localises to the cytoplasmic vesicle membrane. The protein resides in the lysosome. It localises to the cell membrane. It is found in the melanosome. Functionally, may be a guanine exchange factor (GEF) for Rab21, Rab32 and Rab38 and regulate endosome dynamics. May regulate the participation of VAMP7 in membrane fusion events; in vitro inhibits VAMP7-mediated SNARE complex formation by trapping VAMP7 in a closed, fusogenically inactive conformation. Involved in peripheral melanosomal distribution of TYRP1 in melanocytes; the function, which probably is implicating vesicle-trafficking, includes cooperation with Rab32, Rab38 and VAMP7. Involved in the regulation of neurite growth; the function seems to require its GEF activity, probably towards Rab21, and VAMP7 but not Rab32/38. Proposed to be involved in Golgi sorting of VAMP7 and transport of VAMP7 vesicles to the cell surface; the function seems to implicate kinesin heavy chain isoform 5 proteins, GOLGA4, RAB21 and MACF1. Required for the colocalization of VAMP7 and Rab21, probably on TGN sites. Involved in GLUT1 endosome-to-plasma membrane trafficking; the function is dependent of association with VPS29. Regulates the proper trafficking of melanogenic enzymes TYR, TYRP1 and DCT/TYRP2 to melanosomes in melanocytes. This is Ankyrin repeat domain-containing protein 27 (ANKRD27) from Pongo abelii (Sumatran orangutan).